The primary structure comprises 406 residues: Cysteine desulfurase (406 aa).

K226 bears the N6-(pyridoxal phosphate)lysine mark. C364 serves as the catalytic Cysteine persulfide intermediate.

Belongs to the class-V pyridoxal-phosphate-dependent aminotransferase family. Csd subfamily. As to quaternary structure, homodimer. Interacts with SufE and the SufBCD complex composed of SufB, SufC and SufD. The interaction with SufE is required to mediate the direct transfer of the sulfur atom from the S-sulfanylcysteine. The cofactor is pyridoxal 5'-phosphate.

The protein localises to the cytoplasm. It carries out the reaction (sulfur carrier)-H + L-cysteine = (sulfur carrier)-SH + L-alanine. The enzyme catalyses L-selenocysteine + AH2 = hydrogenselenide + L-alanine + A + H(+). Its pathway is cofactor biosynthesis; iron-sulfur cluster biosynthesis. Its function is as follows. Cysteine desulfurases mobilize the sulfur from L-cysteine to yield L-alanine, an essential step in sulfur metabolism for biosynthesis of a variety of sulfur-containing biomolecules. Component of the suf operon, which is activated and required under specific conditions such as oxidative stress and iron limitation. Acts as a potent selenocysteine lyase in vitro, that mobilizes selenium from L-selenocysteine. Selenocysteine lyase activity is however unsure in vivo. The protein is Cysteine desulfurase of Escherichia coli O6:K15:H31 (strain 536 / UPEC).